We begin with the raw amino-acid sequence, 775 residues long: MSSTAHNSQPSTGNGVTKRKSGSAACIHCHRRKVRCDARIVGLPCSNCRSAGKADCRIHEKKKRLAVRSILDPVPIRCRPPPDSDSTPKLLPSTPIQPNAFTTAFRGVQPDVTSPVAAGAQIIQSPHSSYTNGNHLSNNRGSQPITETQTFTRQPGADRSMELENNADLEKRLVKLIDEEESGSREIQRGVRAIYVGHELSNMSFLIRQQRDKDDDVYHFAGNEIPRRQLRTGHDQLLMDALTLPEPALADELVEAYFMHVNPGYPIIEEDLFMTQYRNRDPADPPPILLLQAILLVGAHVTRPKAERDALKEIFFRRVKWLFDSRIERNRDIMVQAALLMTWHSDSADDDVAANAHYWVGVAARIATGLGMHRNPVSSKFVPRDRRMWRRLWYILVQFDVMVSLSYGRPQAINLEDSDVSPLTPSDFEGCGSRVQAEYVIHFSELCTMIPYIVRERFGLRVSAERRKAALQEADEALANWSLKLPDSLRLRASDMDPWSAMLHLTYNNFLILLHRPHPRASAYSDDYGPHDAEICSAAAGVIASIFEELRLNDRLKFLWYSGVHTLFTAMIQVRVELRFSNPVLAINALRRFDSASYSLRELAEYWSHANTILRLFQDSKRLQEDLRMATSERPRRFSTHDQNKNTTNPSNPHPTPTPNLNSNTTIQSAQTEPRPPYEVPTPESPRMPPTTMSPHQNQPFDSWIPSSHLASVDPIDQPREFLDWRQLFSFTDPDQSVLPVPMEGLPELEDEWRQIYWQETPMSDLLQDGGWMHG.

Residues 1 to 15 show a composition bias toward polar residues; sequence MSSTAHNSQPSTGNG. The disordered stretch occupies residues 1–20; the sequence is MSSTAHNSQPSTGNGVTKRK. The zn(2)-C6 fungal-type DNA-binding region spans 26–59; the sequence is CIHCHRRKVRCDARIVGLPCSNCRSAGKADCRIH. A compositionally biased stretch (polar residues) spans 126–153; sequence PHSSYTNGNHLSNNRGSQPITETQTFTR. Disordered stretches follow at residues 126–159 and 630–699; these read PHSSYTNGNHLSNNRGSQPITETQTFTRQPGADR and ATSE…HQNQ. Residues 630–644 are compositionally biased toward basic and acidic residues; that stretch reads ATSERPRRFSTHDQN. The segment covering 674–689 has biased composition (pro residues); that stretch reads PRPPYEVPTPESPRMP.

Its subcellular location is the nucleus. Functionally, positively regulates the expression of genes involved in the catabolism of certain amides, omega amino acids, and lactams. The sequence is that of Acetamidase regulatory protein (amdR) from Aspergillus oryzae (strain ATCC 42149 / RIB 40) (Yellow koji mold).